Reading from the N-terminus, the 152-residue chain is Deoxyuridine 5'-triphosphate nucleotidohydrolase (152 aa).

Substrate-binding positions include 72–74 (RSG), N85, and 89–91 (TID).

The protein belongs to the dUTPase family. The cofactor is Mg(2+).

It catalyses the reaction dUTP + H2O = dUMP + diphosphate + H(+). It participates in pyrimidine metabolism; dUMP biosynthesis; dUMP from dCTP (dUTP route): step 2/2. In terms of biological role, this enzyme is involved in nucleotide metabolism: it produces dUMP, the immediate precursor of thymidine nucleotides and it decreases the intracellular concentration of dUTP so that uracil cannot be incorporated into DNA. The sequence is that of Deoxyuridine 5'-triphosphate nucleotidohydrolase from Rhodopseudomonas palustris (strain HaA2).